We begin with the raw amino-acid sequence, 82 residues long: Hydrogenase maturation factor HybG (82 aa).

Belongs to the HupF/HypC family.

The protein operates within protein modification; [NiFe] hydrogenase maturation. Its function is as follows. Involved in the maturation of [NiFe] hydrogenases. Involved in the biosynthesis of the Fe(CN)(2)CO cofactor. HybG delivers iron-bound CO(2) to HypD where reduction to CO probably occurs. In complex with HypD, accepts the cyanide ligand generated by HypF and HypE, and also coordinates the carbon monoxide ligand. The protein is Hydrogenase maturation factor HybG (hybG) of Escherichia coli O157:H7.